The sequence spans 375 residues: Trichodiene synthase (375 aa).

Belongs to the trichodiene synthase family.

It catalyses the reaction (2E,6E)-farnesyl diphosphate = trichodiene + diphosphate. The protein operates within sesquiterpene biosynthesis; trichothecene biosynthesis. Its function is as follows. TS is a member of the terpene cyclase group of enzymes. It catalyzes the isomerization and cyclization of farnesyl pyro-phosphate to form trichodiene, the first cyclic intermediate in the biosynthetic pathway for trichothecenes. It serves to branch trichothecene biosynthesis from the isoprenoid pathway. In Fusarium austroamericanum, this protein is Trichodiene synthase (TRI5).